A 284-amino-acid chain; its full sequence is Probable endonuclease 4 (284 aa).

Zn(2+)-binding residues include His-66, His-106, Glu-142, Asp-176, His-179, His-213, Asp-226, His-228, and Glu-258.

Belongs to the AP endonuclease 2 family. The cofactor is Zn(2+).

It catalyses the reaction Endonucleolytic cleavage to 5'-phosphooligonucleotide end-products.. Functionally, endonuclease IV plays a role in DNA repair. It cleaves phosphodiester bonds at apurinic or apyrimidinic (AP) sites, generating a 3'-hydroxyl group and a 5'-terminal sugar phosphate. This chain is Probable endonuclease 4, found in Natranaerobius thermophilus (strain ATCC BAA-1301 / DSM 18059 / JW/NM-WN-LF).